Here is a 352-residue protein sequence, read N- to C-terminus: N-acetyl-gamma-glutamyl-phosphate reductase (352 aa).

Cys155 is an active-site residue.

The protein belongs to the NAGSA dehydrogenase family. Type 1 subfamily.

The protein localises to the cytoplasm. The enzyme catalyses N-acetyl-L-glutamate 5-semialdehyde + phosphate + NADP(+) = N-acetyl-L-glutamyl 5-phosphate + NADPH + H(+). Its pathway is amino-acid biosynthesis; L-arginine biosynthesis; N(2)-acetyl-L-ornithine from L-glutamate: step 3/4. Catalyzes the NADPH-dependent reduction of N-acetyl-5-glutamyl phosphate to yield N-acetyl-L-glutamate 5-semialdehyde. The chain is N-acetyl-gamma-glutamyl-phosphate reductase from Cyanothece sp. (strain PCC 7425 / ATCC 29141).